Here is a 207-residue protein sequence, read N- to C-terminus: LexA repressor (207 aa).

Residues V28 to E48 constitute a DNA-binding region (H-T-H motif). Residues S129 and K167 each act as for autocatalytic cleavage activity in the active site.

Belongs to the peptidase S24 family. As to quaternary structure, homodimer.

The catalysed reaction is Hydrolysis of Ala-|-Gly bond in repressor LexA.. Represses a number of genes involved in the response to DNA damage (SOS response), including recA and lexA. In the presence of single-stranded DNA, RecA interacts with LexA causing an autocatalytic cleavage which disrupts the DNA-binding part of LexA, leading to derepression of the SOS regulon and eventually DNA repair. The chain is LexA repressor from Oceanobacillus iheyensis (strain DSM 14371 / CIP 107618 / JCM 11309 / KCTC 3954 / HTE831).